Here is a 101-residue protein sequence, read N- to C-terminus: Urease subunit beta (101 aa).

Belongs to the urease beta subunit family. Heterotrimer of UreA (gamma), UreB (beta) and UreC (alpha) subunits. Three heterotrimers associate to form the active enzyme.

It localises to the cytoplasm. The catalysed reaction is urea + 2 H2O + H(+) = hydrogencarbonate + 2 NH4(+). Its pathway is nitrogen metabolism; urea degradation; CO(2) and NH(3) from urea (urease route): step 1/1. In Albidiferax ferrireducens (strain ATCC BAA-621 / DSM 15236 / T118) (Rhodoferax ferrireducens), this protein is Urease subunit beta.